A 2002-amino-acid chain; its full sequence is [F-actin]-monooxygenase MICAL3 (2002 aa).

Residues 2 to 494 (EERKHETMNP…RHLYDTGETK (493 aa)) form a monooxygenase domain region. Residues C97, 116–118 (EKR), 123–125 (RNN), F183, Y298, and D398 contribute to the FAD site. The region spanning 518–624 (VARSSKLLGW…YLTQFYEMFK (107 aa)) is the Calponin-homology (CH) domain. Residue S649 is modified to Phosphoserine. The disordered stretch occupies residues 658–706 (GQTISRKRSPKDKKEKDLDGAGKRRKTSQSEEEEAPRGHRGERPTLVST). A Nuclear localization signal motif is present at residues 663 to 684 (RKRSPKDKKEKDLDGAGKRRKT). The segment covering 669–679 (DKKEKDLDGAG) has biased composition (basic and acidic residues). Phosphoserine is present on residues S685 and S687. The 63-residue stretch at 762–824 (DTCYFCQKRV…KPHYCYRLSG (63 aa)) folds into the LIM zinc-binding domain. 8 residues coordinate Zn(2+): C764, C767, H785, C788, C791, C794, C814, and H817. The disordered stretch occupies residues 835–883 (PLSGKEAKGPLQDGATTDANGRANAVASSTERTPGSGVNGLEEPSIAKR). T887 bears the Phosphothreonine mark. 3 disordered regions span residues 907 to 1313 (QEVP…SPLA), 1335 to 1776 (RRSL…GKHR), and 1791 to 1821 (LSFS…TYTE). Over residues 938-950 (SEMEEEGEEEEEE) the composition is skewed to acidic residues. Residue S977 is modified to Phosphoserine. The span at 991–1017 (NEEEEEEEEEYEEEEEEDYDEEEEESS) shows a compositional bias: acidic residues. Residues 1041–1054 (HWTHIREREEEERM) are compositionally biased toward basic and acidic residues. Residues 1055–1066 (APASESSASGAP) show a composition bias toward low complexity. Acidic residues predominate over residues 1068–1102 (DENDLEEDVDSEPAEIEGEAAEDGDPGDTGAELDD). 4 positions are modified to phosphoserine: S1134, S1143, S1160, and S1192. The span at 1150-1163 (GPSQATSPIRSPQE) shows a compositional bias: polar residues. Over residues 1191-1218 (KSPEERLFPEPLLPKEKPKADAPSDLKA) the composition is skewed to basic and acidic residues. The segment covering 1239 to 1258 (PGSPQPQPPVAASTPPPSPL) has biased composition (pro residues). 2 stretches are compositionally biased toward polar residues: residues 1268-1280 (TEAT…QSPI) and 1288-1302 (KTST…QSQS). Position 1274 is a phosphoserine (S1274). Phosphothreonine is present on T1276. S1278 is modified (phosphoserine). Phosphoserine is present on residues S1310 and S1337. Position 1341 is a phosphothreonine (T1341). Phosphoserine occurs at positions 1371 and 1384. Residues 1407–1422 (PSDRELRSAQEERREL) show a composition bias toward basic and acidic residues. Residues 1423 to 1435 (SSSSGLGLHGSSS) are compositionally biased toward low complexity. Position 1433 is a phosphoserine (S1433). The span at 1436-1451 (NMKTLGSQSFNTSDSA) shows a compositional bias: polar residues. T1454 is subject to Phosphothreonine. Positions 1456–1467 (PSSPPPPPPPGE) are enriched in pro residues. Over residues 1516 to 1530 (SVEEIPFADDVEDTY) the composition is skewed to acidic residues. Residues 1588-1604 (EAKELAEERMRAREKSV) are compositionally biased toward basic and acidic residues. S1649 carries the phosphoserine modification. Phosphothreonine is present on T1651. Basic and acidic residues predominate over residues 1657–1668 (GSEEPTLKHEAT). A compositionally biased stretch (low complexity) spans 1674-1694 (SPPSDSGGPDGSFTSSEGSSG). Positions 1695–1713 (KSKKRSSLFSPRRNKKEKK) are enriched in basic residues. Phosphoserine is present on residues S1701 and S1704. Residues 1760–1769 (CPSTPSSGAT) show a composition bias toward polar residues. Basic and acidic residues predominate over residues 1804 to 1820 (VLEKSSQKSRREPRTYT). A coiled-coil region spans residues 1821 to 1992 (EEELNAKLTR…EEDKDLEAAM (172 aa)). The region spanning 1841–1990 (KQEELKRLHR…EREEDKDLEA (150 aa)) is the bMERB domain. S1912 is modified (phosphoserine).

This sequence belongs to the Mical family. Interacts with RAB1B, RAB8A, RAB10, RAB13 and RAB15 (in their GTP-bound forms); binding to RAB1B is of low affinity compared to other Rab proteins; at least in case of RAB8A can bind 2 molecules of RAB8A simultaneously through a high and a low affinity binding site, respectively. Interacts with ERC1 and RAB8A; may bridge ERC1 with RAB8A. Interacts with KIF23 and ERC1; enhances the interaction between KIF23 and ERC1. Interacts with NINL isoform 2. Requires FAD as cofactor. In terms of tissue distribution, ubiquitous.

It is found in the cytoplasm. Its subcellular location is the cell cortex. The protein localises to the cytoskeleton. It localises to the nucleus. The protein resides in the midbody. It is found in the spindle. Its subcellular location is the cilium basal body. The catalysed reaction is L-methionyl-[F-actin] + NADPH + O2 + H(+) = L-methionyl-(R)-S-oxide-[F-actin] + NADP(+) + H2O. In terms of biological role, monooxygenase that promotes depolymerization of F-actin by mediating oxidation of specific methionine residues on actin to form methionine-sulfoxide, resulting in actin filament disassembly and preventing repolymerization. In the absence of actin, it also functions as a NADPH oxidase producing H(2)O(2). Seems to act as Rab effector protein and plays a role in vesicle trafficking. Involved in exocytic vesicles tethering and fusion: the monooxygenase activity is required for this process and implicates RAB8A associated with exocytotic vesicles. Required for cytokinesis. Contributes to stabilization and/or maturation of the intercellular bridge independently of its monooxygenase activity. Promotes recruitment of Rab8 and ERC1 to the intercellular bridge, and together these proteins are proposed to function in timely abscission. This chain is [F-actin]-monooxygenase MICAL3 (MICAL3), found in Homo sapiens (Human).